A 125-amino-acid polypeptide reads, in one-letter code: UPF0102 protein ABO_0585 (125 aa).

This sequence belongs to the UPF0102 family.

The protein is UPF0102 protein ABO_0585 of Alcanivorax borkumensis (strain ATCC 700651 / DSM 11573 / NCIMB 13689 / SK2).